The following is a 144-amino-acid chain: MLLPKRVKYRREHRGNMRGEAKGGKEVSFGEWGLQAQTASWITNRQIESARIAMTRYMKRGGKVWIKIFPHKPYTKKPLEVRMGSGKGSPEGWVAVVKPGKIMFEIAGVSEEVAREALRLASHKLPVKCKIVKRQETGGESNES.

It belongs to the universal ribosomal protein uL16 family. As to quaternary structure, part of the 50S ribosomal subunit.

Binds 23S rRNA and is also seen to make contacts with the A and possibly P site tRNAs. This chain is Large ribosomal subunit protein uL16, found in Lysinibacillus sphaericus (strain C3-41).